The primary structure comprises 427 residues: D-inositol 3-phosphate glycosyltransferase 2 (427 aa).

His-14 contributes to the 1D-myo-inositol 3-phosphate binding site. Residues 20 to 21 (QP) and Gly-28 contribute to the UDP-N-acetyl-alpha-D-glucosamine site. Residues 25–30 (DAGGMN), Lys-83, Tyr-116, Thr-140, and Arg-160 contribute to the 1D-myo-inositol 3-phosphate site. The UDP-N-acetyl-alpha-D-glucosamine site is built by Arg-234, Lys-239, and Val-300. The Mg(2+) site is built by Tyr-309, Arg-310, and Ala-312. Positions 322 and 330 each coordinate UDP-N-acetyl-alpha-D-glucosamine. Thr-336 is a binding site for Mg(2+).

This sequence belongs to the glycosyltransferase group 1 family. MshA subfamily. As to quaternary structure, homodimer.

The enzyme catalyses 1D-myo-inositol 3-phosphate + UDP-N-acetyl-alpha-D-glucosamine = 1D-myo-inositol 2-acetamido-2-deoxy-alpha-D-glucopyranoside 3-phosphate + UDP + H(+). In terms of biological role, catalyzes the transfer of a N-acetyl-glucosamine moiety to 1D-myo-inositol 3-phosphate to produce 1D-myo-inositol 2-acetamido-2-deoxy-glucopyranoside 3-phosphate in the mycothiol biosynthesis pathway. The sequence is that of D-inositol 3-phosphate glycosyltransferase 2 from Catenulispora acidiphila (strain DSM 44928 / JCM 14897 / NBRC 102108 / NRRL B-24433 / ID139908).